Here is a 107-residue protein sequence, read N- to C-terminus: U1-lycotoxin-Ls1b (107 aa).

A signal peptide spans 1-20 (MMKVLVVVALLVTHISYSSS). The propeptide occupies 21–41 (EGIDDLEADELLSLMANEQTR). Disulfide bonds link Cys44-Cys59, Cys51-Cys68, Cys58-Cys86, and Cys70-Cys84.

This sequence belongs to the neurotoxin 19 (CSTX) family. 04 (U1-Lctx) subfamily. In terms of tissue distribution, expressed by the venom gland.

The protein localises to the secreted. This chain is U1-lycotoxin-Ls1b, found in Lycosa singoriensis (Wolf spider).